The following is a 299-amino-acid chain: MSSVKIECVGSDRYRLGESPVWDEKENSLLCVDITGRKVCRWDAASGQVQALSVDAPVSSVALRKSGDYVITLGTRFAALKWKEQLVTTIAQVDRDKANNRFNDGKVDPAGRYFAGTMAEEIRPAVLERRQGSLYTLCPDHSVVKHFDQVDISNGLDWSLDHKTFFYIDSLSYSVDAFDYDLQTGKIGNRRSVYKLEKEESIPDGMCIDTEGKLWVACYDGGRVIRLDPETGKRIQTVKLPVDKTTSCCFGGKDYSEMYVTSASDGMDREWLSRQPQAGGVFKITGLGVKGIPPYPFAG.

Residue glutamate 18 participates in a divalent metal cation binding. Substrate contacts are provided by arginine 101, asparagine 103, and glutamate 121. A divalent metal cation is bound by residues asparagine 154 and aspartate 204. Catalysis depends on aspartate 204, which acts as the Proton donor/acceptor.

Belongs to the SMP-30/CGR1 family. Requires Zn(2+) as cofactor. The cofactor is Mn(2+). Ca(2+) serves as cofactor. It depends on Mg(2+) as a cofactor.

It is found in the cytoplasm. It carries out the reaction D-glucono-1,5-lactone + H2O = D-gluconate + H(+). Its pathway is cofactor biosynthesis; L-ascorbate biosynthesis via UDP-alpha-D-glucuronate pathway; L-ascorbate from UDP-alpha-D-glucuronate: step 3/4. Functionally, gluconolactonase with low activity towards other sugar lactones, including gulonolactone and galactonolactone. Catalyzes a key step in ascorbic acid (vitamin C) biosynthesis. Can also hydrolyze diisopropyl phosphorofluoridate and phenylacetate (in vitro). Calcium-binding protein. Modulates Ca(2+) signaling, and Ca(2+)-dependent cellular processes and enzyme activities. This chain is Regucalcin, found in Gallus gallus (Chicken).